Consider the following 937-residue polypeptide: Vacuolar membrane protease (937 aa).

Topologically, residues 1–16 (PNGFVKFIRSIFGYRK) are cytoplasmic. A helical membrane pass occupies residues 17 to 37 (TSLTLFVILTYVAVLLLAYLD). Topologically, residues 38 to 373 (HSLYYSVDLP…FPTSQVVVAS (336 aa)) are vacuolar. N-linked (GlcNAc...) asparagine glycans are attached at residues N106 and N140. Residues H154 and D166 each contribute to the Zn(2+) site. The active-site Proton acceptor is E201. The Zn(2+) site is built by E202, E227, and H300. A helical membrane pass occupies residues 374-394 (ILLLVLIPGISIPFLIIIFGY). The Cytoplasmic portion of the chain corresponds to 395–407 (KKNWELSFVNVTK). A helical membrane pass occupies residues 408-428 (FPISLAISAALLNLFTNGFIV). The Vacuolar portion of the chain corresponds to 429 to 437 (PFNQFLPNS). Residues 438 to 458 (SPFALVAILFATFLLLNYLIL) traverse the membrane as a helical segment. Over 459-475 (NGINLIFVSYKIVNHDE) the chain is Cytoplasmic. A helical transmembrane segment spans residues 476–496 (KLISIIETSFLYWVVLIYSTA). Residues 497 to 510 (KLANNVIGDDHSGE) are Vacuolar-facing. A helical membrane pass occupies residues 511-531 (FPIIFLCALQAVASIFGLIGW). Residues 532-580 (SFKPVPKEHYVVVPQEEAEPLLGSSDNFNYGSPDVEDDRLVSDGSYDWS) lie on the Cytoplasmic side of the membrane. Residues 581-601 (IQFLTIVPISTYLIYNSGFLV) form a helical membrane-spanning segment. Residues 602–618 (VDGINKSIQESLISQNL) are Vacuolar-facing. N606 is a glycosylation site (N-linked (GlcNAc...) asparagine). A helical transmembrane segment spans residues 619 to 639 (IYKLLQTFAISLSIPLLPFIF). At 640 to 643 (KVNR) the chain is on the cytoplasmic side. Residues 644 to 664 (LFVLALFLISTIGVLFVATAD) traverse the membrane as a helical segment. Residues 665 to 937 (SFNVANPLKL…LVSVSKTVEL (273 aa)) lie on the Vacuolar side of the membrane. N-linked (GlcNAc...) asparagine glycosylation is found at N758, N870, and N887.

It belongs to the peptidase M28 family. The cofactor is Zn(2+).

The protein resides in the vacuole membrane. May be involved in vacuolar sorting and osmoregulation. This is Vacuolar membrane protease from Scheffersomyces stipitis (strain ATCC 58785 / CBS 6054 / NBRC 10063 / NRRL Y-11545) (Yeast).